Consider the following 386-residue polypeptide: S-adenosylmethionine synthase (386 aa).

His16 lines the ATP pocket. Asp18 contributes to the Mg(2+) binding site. Glu44 serves as a coordination point for K(+). Positions 57 and 100 each coordinate L-methionine. The flexible loop stretch occupies residues 100–110; sequence QSPDINVGVDQ. Residues 164–166, 231–232, Asp240, 246–247, Ala263, and Lys267 each bind ATP; these read DGK, RF, and RK. L-methionine is bound at residue Asp240. Lys271 provides a ligand contact to L-methionine.

It belongs to the AdoMet synthase family. As to quaternary structure, homotetramer; dimer of dimers. Mg(2+) serves as cofactor. The cofactor is K(+).

It localises to the cytoplasm. It carries out the reaction L-methionine + ATP + H2O = S-adenosyl-L-methionine + phosphate + diphosphate. The protein operates within amino-acid biosynthesis; S-adenosyl-L-methionine biosynthesis; S-adenosyl-L-methionine from L-methionine: step 1/1. Catalyzes the formation of S-adenosylmethionine (AdoMet) from methionine and ATP. The overall synthetic reaction is composed of two sequential steps, AdoMet formation and the subsequent tripolyphosphate hydrolysis which occurs prior to release of AdoMet from the enzyme. In Sulfurovum sp. (strain NBC37-1), this protein is S-adenosylmethionine synthase.